The primary structure comprises 166 residues: Protein-export protein SecB (166 aa).

The protein belongs to the SecB family. Homotetramer, a dimer of dimers. One homotetramer interacts with 1 SecA dimer.

The protein localises to the cytoplasm. Its function is as follows. One of the proteins required for the normal export of preproteins out of the cell cytoplasm. It is a molecular chaperone that binds to a subset of precursor proteins, maintaining them in a translocation-competent state. It also specifically binds to its receptor SecA. The polypeptide is Protein-export protein SecB (Roseobacter denitrificans (strain ATCC 33942 / OCh 114) (Erythrobacter sp. (strain OCh 114))).